A 458-amino-acid chain; its full sequence is GTPase Der (458 aa).

2 EngA-type G domains span residues Pro-4–Leu-169 and Ile-178–Arg-353. Residues Gly-10–Ser-17, Asp-57–Leu-61, Asn-120–Glu-123, Gly-184–Ser-191, Asp-231–Ile-235, and Asn-296–Asp-299 each bind GTP. Residues Arg-354–Gln-439 enclose the KH-like domain.

The protein belongs to the TRAFAC class TrmE-Era-EngA-EngB-Septin-like GTPase superfamily. EngA (Der) GTPase family. In terms of assembly, associates with the 50S ribosomal subunit.

In terms of biological role, GTPase that plays an essential role in the late steps of ribosome biogenesis. The polypeptide is GTPase Der (Prochlorococcus marinus subsp. pastoris (strain CCMP1986 / NIES-2087 / MED4)).